The primary structure comprises 285 residues: MQEASGLAPAPLPFQGRAMSLRETAYAKINLALHVRRRRDDGYHELETLFAFVDAGDELTAKPAPADSLRVFGEFGGALDDPFGNIVAKALGTLPHGEGWAVTLEKHLPVAAGLGGGSADAGAVFRMVERSHGLPADWHARAARLGADVPACVESAACIGRGTGTELEPIPNDLAGTPVLLVNPRIPLATGPVFKAWDGVDRGALEGATAREVAFAGRNDLEAPALSLVPEIGAVLVTLRQTGGWLTRMSGSGATCFALYDTPEQRDLAQAAMPPSWWTLGGALR.

K28 is an active-site residue. 109–119 (PVAAGLGGGSA) serves as a coordination point for ATP. D148 is a catalytic residue.

It belongs to the GHMP kinase family. IspE subfamily.

The enzyme catalyses 4-CDP-2-C-methyl-D-erythritol + ATP = 4-CDP-2-C-methyl-D-erythritol 2-phosphate + ADP + H(+). It participates in isoprenoid biosynthesis; isopentenyl diphosphate biosynthesis via DXP pathway; isopentenyl diphosphate from 1-deoxy-D-xylulose 5-phosphate: step 3/6. In terms of biological role, catalyzes the phosphorylation of the position 2 hydroxy group of 4-diphosphocytidyl-2C-methyl-D-erythritol. This Novosphingobium aromaticivorans (strain ATCC 700278 / DSM 12444 / CCUG 56034 / CIP 105152 / NBRC 16084 / F199) protein is 4-diphosphocytidyl-2-C-methyl-D-erythritol kinase.